The sequence spans 163 residues: Lipoprotein signal peptidase (163 aa).

4 helical membrane passes run 9 to 29 (AWPW…SKYL), 42 to 62 (ILPF…SFLG), 67 to 87 (WQII…ILWL), and 93 to 113 (SEIM…GNFI). Catalysis depends on residues Asp-123 and Asp-141. A helical membrane pass occupies residues 137–157 (FNVADSAICVGVFLLIVHMLL).

The protein belongs to the peptidase A8 family.

Its subcellular location is the cell inner membrane. It catalyses the reaction Release of signal peptides from bacterial membrane prolipoproteins. Hydrolyzes -Xaa-Yaa-Zaa-|-(S,diacylglyceryl)Cys-, in which Xaa is hydrophobic (preferably Leu), and Yaa (Ala or Ser) and Zaa (Gly or Ala) have small, neutral side chains.. Its pathway is protein modification; lipoprotein biosynthesis (signal peptide cleavage). Its function is as follows. This protein specifically catalyzes the removal of signal peptides from prolipoproteins. The sequence is that of Lipoprotein signal peptidase from Coxiella burnetii (strain RSA 493 / Nine Mile phase I).